A 264-amino-acid polypeptide reads, in one-letter code: Thymidylate synthase (264 aa).

DUMP is bound at residue R21. H51 lines the (6R)-5,10-methylene-5,6,7,8-tetrahydrofolate pocket. A dUMP-binding site is contributed by 126 to 127; the sequence is RR. The Nucleophile role is filled by C146. DUMP contacts are provided by residues 166–169, N177, and 207–209; these read RSCD and HLY. Position 169 (D169) interacts with (6R)-5,10-methylene-5,6,7,8-tetrahydrofolate. A263 contacts (6R)-5,10-methylene-5,6,7,8-tetrahydrofolate.

This sequence belongs to the thymidylate synthase family. Bacterial-type ThyA subfamily. Homodimer.

The protein localises to the cytoplasm. It catalyses the reaction dUMP + (6R)-5,10-methylene-5,6,7,8-tetrahydrofolate = 7,8-dihydrofolate + dTMP. It participates in pyrimidine metabolism; dTTP biosynthesis. In terms of biological role, catalyzes the reductive methylation of 2'-deoxyuridine-5'-monophosphate (dUMP) to 2'-deoxythymidine-5'-monophosphate (dTMP) while utilizing 5,10-methylenetetrahydrofolate (mTHF) as the methyl donor and reductant in the reaction, yielding dihydrofolate (DHF) as a by-product. This enzymatic reaction provides an intracellular de novo source of dTMP, an essential precursor for DNA biosynthesis. The chain is Thymidylate synthase from Sodalis glossinidius (strain morsitans).